The following is a 169-amino-acid chain: Putative pre-16S rRNA nuclease (169 aa).

The span at 1–19 (MTDSDHRLPDRPGEGDPGR) shows a compositional bias: basic and acidic residues. Residues 1–24 (MTDSDHRLPDRPGEGDPGRGRRIG) are disordered.

The protein belongs to the YqgF nuclease family.

It is found in the cytoplasm. Its function is as follows. Could be a nuclease involved in processing of the 5'-end of pre-16S rRNA. The chain is Putative pre-16S rRNA nuclease from Mycobacterium sp. (strain KMS).